Reading from the N-terminus, the 543-residue chain is Probable malate:quinone oxidoreductase (543 aa).

Belongs to the MQO family. The cofactor is FAD.

It carries out the reaction (S)-malate + a quinone = a quinol + oxaloacetate. Its pathway is carbohydrate metabolism; tricarboxylic acid cycle; oxaloacetate from (S)-malate (quinone route): step 1/1. This chain is Probable malate:quinone oxidoreductase, found in Acinetobacter baylyi (strain ATCC 33305 / BD413 / ADP1).